We begin with the raw amino-acid sequence, 149 residues long: Thiosulfate sulfurtransferase RDL2, mitochondrial (149 aa).

Residues methionine 1–phenylalanine 25 constitute a mitochondrion transit peptide. One can recognise a Rhodanese domain in the interval proline 45–lysine 146. The active-site Cysteine persulfide intermediate is cysteine 106.

It localises to the mitochondrion. The enzyme catalyses thiosulfate + hydrogen cyanide = thiocyanate + sulfite + 2 H(+). In terms of biological role, thiosulfate sulfurtransferase which catalyzes the transfer of sulfane sulfur from thiosulfate to cyanide. This Saccharomyces cerevisiae (strain ATCC 204508 / S288c) (Baker's yeast) protein is Thiosulfate sulfurtransferase RDL2, mitochondrial (RDL2).